Here is a 162-residue protein sequence, read N- to C-terminus: Ribosome maturation factor RimP (162 aa).

Belongs to the RimP family.

The protein localises to the cytoplasm. In terms of biological role, required for maturation of 30S ribosomal subunits. This Ralstonia nicotianae (strain ATCC BAA-1114 / GMI1000) (Ralstonia solanacearum) protein is Ribosome maturation factor RimP.